Reading from the N-terminus, the 468-residue chain is UDP-N-acetylmuramoylalanine--D-glutamate ligase (468 aa).

Residue 117–123 coordinates ATP; it reads GTDGKTT.

The protein belongs to the MurCDEF family.

It localises to the cytoplasm. It carries out the reaction UDP-N-acetyl-alpha-D-muramoyl-L-alanine + D-glutamate + ATP = UDP-N-acetyl-alpha-D-muramoyl-L-alanyl-D-glutamate + ADP + phosphate + H(+). It functions in the pathway cell wall biogenesis; peptidoglycan biosynthesis. Functionally, cell wall formation. Catalyzes the addition of glutamate to the nucleotide precursor UDP-N-acetylmuramoyl-L-alanine (UMA). This is UDP-N-acetylmuramoylalanine--D-glutamate ligase from Chloroherpeton thalassium (strain ATCC 35110 / GB-78).